Here is a 104-residue protein sequence, read N- to C-terminus: MSNITIYHNPACGTSRNTLEMLHNNGNEPTIINYLDMPPTRDELIKLISDIFSDKIIECIREQCHLMPALSLNVIGHVDIRSIHSYLFNFNEKVSPSHGFIKNG.

Residue Cys12 is part of the active site.

This sequence belongs to the ArsC family.

The catalysed reaction is [glutaredoxin]-dithiol + arsenate + glutathione + H(+) = glutathionyl-S-S-[glutaredoxin] + arsenite + H2O. Its function is as follows. Reduction of arsenate [As(V)] to arsenite [As(III)]. This protein expands the substrate specificity of ArsAB pump which can extrude arsenite and antimonite to allow for arsenate pumping and resistance. The protein is Putative arsenate reductase (yfjU) of Escherichia coli (strain K12).